Reading from the N-terminus, the 1069-residue chain is Adenylate-forming reductase (1069 aa).

Residues 20–391 form an adenylation (A) domain region; it reads HPEDPKAVKS…WKLRQDINYR (372 aa). AMP-binding positions include His262, 357–358, Thr362, and 437–440; these read AH and AVGR. In terms of domain architecture, Carrier spans 576-656; that stretch reads DSLEEDLKDL…KLGASLRHLA (81 aa). At Ser612 the chain carries O-(pantetheine 4'-phosphoryl)serine. Residues 686–1032 form a reductase (R) domain region; sequence TVLLTGSTGN…TGKVILDTSR (347 aa). Residues 693–696, Arg719, 785–787, Tyr863, and Lys867 contribute to the NADP(+) site; these read TGNL and NAW.

This sequence belongs to the adenylate-forming reductase family.

The catalysed reaction is 5-methylorsellinate + ATP + NADPH + H(+) = 2,4-dihydroxy 5,6-dimethylbenzaldehyde + AMP + diphosphate + NADP(+). It participates in secondary metabolite biosynthesis. Its function is as follows. Non-canonical non-ribosomal peptide synthetase; part of the cluster A that mediates the biosynthesis of azasperpyranones, members of the azaphilone family that exhibit anti-cancer activities. Azasperpyranones are synthesized by 2 clusters, A and B. Cluster A is responsible for the production of the polyhydric phenol moiety while the azaphilonoid scaffold is produced by the cluster B. The non-reducing polyketide synthase ATEG_03629 produces 5-methyl orsellinic acid, which is then reduced to 5-methyl orsellinic aldehyde by the NRPS-like protein ATEG_03630. 5-methyl orsellinic aldehyde is then first hydroxylated by the FAD-dependent monooxygenase ATEG_03635 and subsequently hydroxylated by the cytochrome P450 monooxygenase ATEG_03631 to produce the unstable polyhydric phenol precursor of azasperpyranones. On the other hand, the polyketide synthase ATEG_07659 is responsible for producing the 3,5-dimethyloctadienone moiety from acetyl-CoA, three malonyl-CoA, and two S-adenosyl methionines (SAM). The 3,5-dimethyloctadienone moiety is then loaded onto the SAT domain of ATEG_07661 and extended with four malonyl-CoA and one SAM, which leads to the formation of 2,4-dihydroxy-6-(5,7-dimethyl-2-oxo-trans-3-trans-5-nonadienyl)-3-methylbenzaldehyde (compound 8) after reductive release and aldol condensation. The FAD-dependent monooxygenase ATEG_07662 is the next enzyme in the biosynthesis sequence and hydroxylates the side chain at the benzylic position of compound 8. In Aspergillus nidulans, afoF, the ortholog of the FAD-dependent oxygenase ATEG_07660, is the key enzyme for the biosynthesis of asperfuranone by catalyzing the hydroxylation at C-8 of to prevent the formation of a six-membered ring hemiacetal intermediate and thus facilitating the formation of a five-membered ring to produce asperfuranone. In Aspergillus terreus, ATEG_07660 is probably not functional, which leads to the formation of the six-membered ring hemiacetal intermediate presperpyranone instead of asperfuranone. Finally, ATEG_03636 is involved in the condensation of the polyhydric phenol moiety produced by cluster A and the perasperpyranone precursor produced by cluster B, to yield azasperpyranone A. Further modifications of azasperpyranone A result in the production of derivatives, including azasperpyranone B to F. This is Adenylate-forming reductase from Aspergillus terreus (strain NIH 2624 / FGSC A1156).